The primary structure comprises 330 residues: Stimulated by retinoic acid gene 8 protein homolog (330 aa).

The short motif at 50–55 (RVARRR) is the Nuclear localization signal (NLS) element. Residues 88-112 (QVLNKAKSHIPELEQTLDNLLKLKA) are a coiled coil.

Interacts with XPO1. Interacts with MEIOSIN. Post-translationally, phosphorylated. In terms of tissue distribution, expressed specifically in testis and fetal ovaries.

The protein resides in the cytoplasm. Its subcellular location is the nucleus. In terms of biological role, meiosis-inducer required for the transition into meiosis for both female and male germ cells. In female germ cells, acts downstream of ZGLP1 as a key effector of the meiotic program: required for premeiotic DNA replication and subsequent events in meiotic prophase. During spermatogenesis, next to its role in meiotic initiation, promotes (but is not required for) spermatogonial differentiation. In complex with MEIOSIN, directly activates the transcription of a subset of critical meiotic genes playing a central role in cell-cycle switching from mitosis to meiosis. The sequence is that of Stimulated by retinoic acid gene 8 protein homolog from Homo sapiens (Human).